The primary structure comprises 182 residues: NADH-dependent FAD reductase (182 aa).

Asp-16 contacts NAD(+). FAD is bound by residues 47-48 (NS), 62-64 (CVG), and His-98. Residue His-143 coordinates NAD(+).

The protein belongs to the non-flavoprotein flavin reductase family. As to quaternary structure, homodimer.

It catalyses the reaction FADH2 + NAD(+) = FAD + NADH + 2 H(+). It participates in antibiotic biosynthesis. The SgcE6-SgcC hydroxylation activity decreases in the presence of excess FAD. Its function is as follows. Reductase component of a two-component system involved in the biosynthesis of the enediyne antitumor antibiotic C-1027. SgcE6 provides the FADH(2) required by both the halogenase SgcC3 and the monooxygenase SgcC through free diffusion. Accepts only NADH and FAD as substrates. The polypeptide is NADH-dependent FAD reductase (Streptomyces globisporus).